We begin with the raw amino-acid sequence, 424 residues long: Caspase-2 (424 aa).

Residues 1–140 (MLGACGMQRY…IVEHSLDSGD (140 aa)) constitute a propeptide that is removed on maturation. The region spanning 7-96 (MQRYHQEALK…QHLAEMILKT (90 aa)) is the CARD domain. Catalysis depends on residues histidine 248 and cysteine 291. Basic and acidic residues predominate over residues 296–310 (TDRGVDQRDGKERSD). The tract at residues 296-325 (TDRGVDQRDGKERSDSPGCEESDANKEENL) is disordered.

This sequence belongs to the peptidase C14A family. As to quaternary structure, heterotetramer that consists of two anti-parallel arranged heterodimers, each one formed by a p18 subunit and a p12 subunit.

It carries out the reaction Strict requirement for an Asp residue at P1, with 316-Asp being essential for proteolytic activity and has a preferred cleavage sequence of Val-Asp-Val-Ala-Asp-|-.. Involved in the activation cascade of caspases responsible for apoptosis execution. Might function by either activating some proteins required for cell death or inactivating proteins necessary for cell survival. This chain is Caspase-2 (CASP2), found in Gallus gallus (Chicken).